A 445-amino-acid chain; its full sequence is MNKFAIIHMQKFQISDVQGIQKHNQRQGKSKSNLDIDYSKSEQNYDLLNQQKIRYESTIKQEISERVKRKPRANSVVLSEFVVTASPDYMHSLSLEEQKRYFESSLDFIQKRYGKQNTLYAMVHMDEATPHMHIGVMPITEDNRLSAKDMFTRKELISLQQDFPLEMREKGFDVDRGEGSEKKHLSPQAFKEKQDLEVEVEQLSNVKTHLKTKVVETHNQLQQTTNYIEKQNETLQKIQQQFLSLDKKIKEKKQEFETFRNQIPDKPVSMSYLREETKTEVTTKLFGKPEITEKKTGNIVVTREQWRDMTEKVNAAVIVKKDYERLQKTDLVKENQSLREDNKYLEETIKGNNLALKHSYKQNRELEEVNKELHTEIGTLKAHIRDLQMNIKVLYQQTKKVFKEQFKAFRGLIKNELDMKGVDNQFEREHTREIRSRQKGYDMER.

The DNA site is built by tyrosine 45 and tyrosine 113.

It belongs to the plasmid mobilization pre family.

The chain is Plasmid recombination enzyme from Bacillus thuringiensis.